A 748-amino-acid chain; its full sequence is E3 ubiquitin-protein ligase SMURF2 (748 aa).

The C2 domain maps to 1 to 119 (MSNPGGRRNG…TGYQRLDLCK (119 aa)). A Glycyl lysine isopeptide (Lys-Gly) (interchain with G-Cter in ubiquitin) cross-link involves residue K119. WW domains follow at residues 157-190 (NDLP…RPTR), 251-284 (PDLP…DPRV), and 297-330 (GPLP…DPRL). The region spanning 414–748 (RPKDLWKRLM…IEETCGFAVE (335 aa)) is the HECT domain. C716 (glycyl thioester intermediate) is an active-site residue.

In terms of assembly, interacts (via WW domains) with SMAD1. Interacts (via WW domains) with SMAD2 (via PY-motif). Interacts (via WW domains) with SMAD3 (via PY-motif). Interacts with SMAD6. Interacts with SMAD7 (via PY-motif) and TGFBR1; SMAD7 recruits SMURF2 to the TGF-beta receptor and regulates its degradation. Does not interact with SMAD4; SMAD4 lacks a PY-motif. Interacts with AIMP1. Interacts with SNON. Interacts with STAMBP and RNF11. May interact with NDFIP1 and NDFIP2; this interaction induces the E3 ubiquitin-protein ligase activity. Interacts with TTC3. As to quaternary structure, (Microbial infection) Interacts (via WW domains) with EBOV and MARV VP40 (via PPXY motif); the interaction facilitates VP40 virus-like particle budding. In terms of processing, auto-ubiquitinated and ubiquitinated in the presence of RNF11 and UBE2D1. Ubiquitinated by the SCF(FBXL15) complex and TTC3, leading to its degradation by the proteasome. 'Lys-48'-linked polyubiquitination mediated by TRAF4 at Lys-119 leads to SMURF2 proteasomal degradation. Widely expressed.

Its subcellular location is the nucleus. It is found in the cytoplasm. The protein localises to the cell membrane. It localises to the membrane raft. It catalyses the reaction S-ubiquitinyl-[E2 ubiquitin-conjugating enzyme]-L-cysteine + [acceptor protein]-L-lysine = [E2 ubiquitin-conjugating enzyme]-L-cysteine + N(6)-ubiquitinyl-[acceptor protein]-L-lysine.. The protein operates within protein modification; protein ubiquitination. With respect to regulation, activated by NDFIP1- and NDFIP2-binding. Functionally, E3 ubiquitin-protein ligase which accepts ubiquitin from an E2 ubiquitin-conjugating enzyme in the form of a thioester and then directly transfers the ubiquitin to targeted substrates. Interacts with SMAD7 to trigger SMAD7-mediated transforming growth factor beta/TGF-beta receptor ubiquitin-dependent degradation, thereby down-regulating TGF-beta signaling. In addition, interaction with SMAD7 activates autocatalytic degradation, which is prevented by interaction with AIMP1. Also forms a stable complex with TGF-beta receptor-mediated phosphorylated SMAD1, SMAD2 and SMAD3, and targets SMAD1 and SMAD2 for ubiquitination and proteasome-mediated degradation. SMAD2 may recruit substrates, such as SNON, for ubiquitin-dependent degradation. Negatively regulates TGFB1-induced epithelial-mesenchymal transition and myofibroblast differentiation. Its function is as follows. (Microbial infection) In case of filoviruses Ebola/EBOV and Marburg/MARV infection, the complex formed by viral matrix protein VP40 and SMURF2 facilitates virus budding. This Homo sapiens (Human) protein is E3 ubiquitin-protein ligase SMURF2.